An 860-amino-acid chain; its full sequence is MEIGTTGAVGAAPQFSVPRRPGYGTMGKPIKLLANCFQVDIPKMDVYLYDVDIKPEKCPRRVNREVVDSMVQHFKVTIFGDRRPVYDGKKSLYTAQPLPVASAGVDLDVTLPGEGGKDRIFKVTIKFVSLVSWHMLHEVLTGRSTPDPLELDKPISTNPVHAVDVVLRHLPSMRYTPVGRSFFSSPEGYDHPLGGGREVWFGFHQSVRPAMWKMMLNIDVSATAFYKAQPVIQFMCEVLDIHNIDEQPRPLTDSHRVKFTKEIKGLKVEVTHCGTMRRKYRVCNVTRRPASHQTFPLQLENGQTVERTVAQYFREKYNLQLKYPHLPCLQVGQEQKHTYLPLEVCNIVAGQRCIKKLTDNQTSTMIKATARSAPDRQEEISRLVRSANYNSDPFVQEFQFRVRDEMAEVTGRVLPAPMLQYGGRNRTVATPSHGVWDMRGKQFHTGVEIKMWAIACFATQRQCREEVLKGFTDQLRKISKDAGMPIQGQPCFCKYAQGADNVEPMFRHLKNTYAGLQLIIVILPGKTPVYAEVKRVGDTLLGMATQCVQVKNVVKTSPQTLSNLCLKINVKLGGINNILVPHQRPSVFQQPVIFLGADVTHPPAGDGKKPSIAAVVGSMDAHPSRYCATVRVQRPRQEVIQDLASMVRELLIQFYKSTHYKPTRIIFYRDGVSEGQFRQVLYYELLAIREACISLEKEYQPGITYIVVQKRHHTRLFCADRAERVGRSGNIPAGTTVDTDITHPYEFDFYLCSHAGIQGTSRPSHYYVLWDDNCFTADEFQLLTYQLCHTYVRCTRSVSIPAPAYYAHLVAFRARYHLVDKEHDSAEGSHVSGQSNGRDPQALAKAVQIHHDTLRTMYFA.

The region spanning proline 230–alanine 349 is the PAZ domain. The Piwi domain occupies leucine 518 to valine 819. The interaction with guide RNA stretch occupies residues tyrosine 530–lysine 567. A divalent metal cation contacts are provided by aspartate 598, glutamate 638, and aspartate 670. The interaction with guide RNA stretch occupies residues glutamine 758–tyrosine 805. A divalent metal cation is bound at residue histidine 808.

It belongs to the argonaute family. Ago subfamily.

It is found in the cytoplasm. The protein localises to the P-body. It catalyses the reaction Endonucleolytic cleavage to 5'-phosphomonoester.. Functionally, required for RNA-mediated gene silencing (RNAi). Binds to short RNAs such as microRNAs (miRNAs) and represses the translation of mRNAs which are complementary to them. Possesses RNA slicer activity but only on select RNAs bearing 5'- and 3'-flanking sequences to the region of guide-target complementarity. This is Protein argonaute-3 (ago3) from Danio rerio (Zebrafish).